Consider the following 602-residue polypeptide: Aspartate--tRNA(Asp/Asn) ligase (602 aa).

Residue Glu176 participates in L-aspartate binding. The tract at residues 200–203 (QQFK) is aspartate. L-aspartate-binding residues include Arg222 and His452. 222–224 (RDE) is a binding site for ATP. Glu490 lines the ATP pocket. Arg497 contributes to the L-aspartate binding site. Residue 542 to 545 (GIDR) coordinates ATP.

It belongs to the class-II aminoacyl-tRNA synthetase family. Type 1 subfamily. As to quaternary structure, homodimer.

It is found in the cytoplasm. It carries out the reaction tRNA(Asx) + L-aspartate + ATP = L-aspartyl-tRNA(Asx) + AMP + diphosphate. Aspartyl-tRNA synthetase with relaxed tRNA specificity since it is able to aspartylate not only its cognate tRNA(Asp) but also tRNA(Asn). Reaction proceeds in two steps: L-aspartate is first activated by ATP to form Asp-AMP and then transferred to the acceptor end of tRNA(Asp/Asn). This is Aspartate--tRNA(Asp/Asn) ligase from Rickettsia akari (strain Hartford).